A 209-amino-acid polypeptide reads, in one-letter code: Putative BTB/POZ domain-containing protein At2g40450 (209 aa).

A BTB domain is found at A24–S98.

The protein operates within protein modification; protein ubiquitination. Its function is as follows. May act as a substrate-specific adapter of an E3 ubiquitin-protein ligase complex (CUL3-RBX1-BTB) which mediates the ubiquitination and subsequent proteasomal degradation of target proteins. The sequence is that of Putative BTB/POZ domain-containing protein At2g40450 from Arabidopsis thaliana (Mouse-ear cress).